The sequence spans 119 residues: Phosphoribosyl-AMP cyclohydrolase (119 aa).

A Mg(2+)-binding site is contributed by Asp-77. Cys-78 contributes to the Zn(2+) binding site. Mg(2+)-binding residues include Asp-79 and Asp-81. Residues Cys-94 and Cys-101 each contribute to the Zn(2+) site.

Belongs to the PRA-CH family. Homodimer. Mg(2+) serves as cofactor. The cofactor is Zn(2+).

Its subcellular location is the cytoplasm. It carries out the reaction 1-(5-phospho-beta-D-ribosyl)-5'-AMP + H2O = 1-(5-phospho-beta-D-ribosyl)-5-[(5-phospho-beta-D-ribosylamino)methylideneamino]imidazole-4-carboxamide. It functions in the pathway amino-acid biosynthesis; L-histidine biosynthesis; L-histidine from 5-phospho-alpha-D-ribose 1-diphosphate: step 3/9. Its function is as follows. Catalyzes the hydrolysis of the adenine ring of phosphoribosyl-AMP. This chain is Phosphoribosyl-AMP cyclohydrolase, found in Dinoroseobacter shibae (strain DSM 16493 / NCIMB 14021 / DFL 12).